Reading from the N-terminus, the 1072-residue chain is Carbamoyl phosphate synthase large chain (1072 aa).

A carboxyphosphate synthetic domain region spans residues 1-401 (MPKRLDINTI…SLLKAVRSLE (401 aa)). Positions 129, 169, 175, 176, 208, 210, 215, 241, 242, 243, 284, and 298 each coordinate ATP. Positions 133–327 (RTLMQELNEP…IAKLAAKIAV (195 aa)) constitute an ATP-grasp 1 domain. Residues Gln284, Glu298, and Asn300 each contribute to the Mg(2+) site. 3 residues coordinate Mn(2+): Gln284, Glu298, and Asn300. The interval 402–546 (LGIYHLELDH…YSTYADENES (145 aa)) is oligomerization domain. The tract at residues 547 to 929 (IVTDRKSVVV…ALYKGLVASG (383 aa)) is carbamoyl phosphate synthetic domain. One can recognise an ATP-grasp 2 domain in the interval 671-861 (EAALTKLGIP…MANVATKVIL (191 aa)). Residues Arg707, Arg746, Glu752, Gly777, Val778, His779, Ser780, Gln820, and Glu832 each contribute to the ATP site. The Mg(2+) site is built by Gln820, Glu832, and Asn834. Residues Gln820, Glu832, and Asn834 each coordinate Mn(2+). The region spanning 930 to 1072 (INIPTHGSVI…QTKRHEVVHA (143 aa)) is the MGS-like domain. The interval 930-1072 (INIPTHGSVI…QTKRHEVVHA (143 aa)) is allosteric domain.

Belongs to the CarB family. Composed of two chains; the small (or glutamine) chain promotes the hydrolysis of glutamine to ammonia, which is used by the large (or ammonia) chain to synthesize carbamoyl phosphate. Tetramer of heterodimers (alpha,beta)4. Mg(2+) serves as cofactor. The cofactor is Mn(2+).

It catalyses the reaction hydrogencarbonate + L-glutamine + 2 ATP + H2O = carbamoyl phosphate + L-glutamate + 2 ADP + phosphate + 2 H(+). The enzyme catalyses hydrogencarbonate + NH4(+) + 2 ATP = carbamoyl phosphate + 2 ADP + phosphate + 2 H(+). Its pathway is amino-acid biosynthesis; L-arginine biosynthesis; carbamoyl phosphate from bicarbonate: step 1/1. It participates in pyrimidine metabolism; UMP biosynthesis via de novo pathway; (S)-dihydroorotate from bicarbonate: step 1/3. Its function is as follows. Large subunit of the glutamine-dependent carbamoyl phosphate synthetase (CPSase). CPSase catalyzes the formation of carbamoyl phosphate from the ammonia moiety of glutamine, carbonate, and phosphate donated by ATP, constituting the first step of 2 biosynthetic pathways, one leading to arginine and/or urea and the other to pyrimidine nucleotides. The large subunit (synthetase) binds the substrates ammonia (free or transferred from glutamine from the small subunit), hydrogencarbonate and ATP and carries out an ATP-coupled ligase reaction, activating hydrogencarbonate by forming carboxy phosphate which reacts with ammonia to form carbamoyl phosphate. The polypeptide is Carbamoyl phosphate synthase large chain (Bacillus thuringiensis subsp. konkukian (strain 97-27)).